Here is a 705-residue protein sequence, read N- to C-terminus: Ribosomal RNA large subunit methyltransferase K/L (705 aa).

In terms of domain architecture, THUMP spans 43–154; it reads LMYQSLMWSR…KDTASIALDL (112 aa).

Belongs to the methyltransferase superfamily. RlmKL family.

It localises to the cytoplasm. It carries out the reaction guanosine(2445) in 23S rRNA + S-adenosyl-L-methionine = N(2)-methylguanosine(2445) in 23S rRNA + S-adenosyl-L-homocysteine + H(+). The enzyme catalyses guanosine(2069) in 23S rRNA + S-adenosyl-L-methionine = N(2)-methylguanosine(2069) in 23S rRNA + S-adenosyl-L-homocysteine + H(+). Its function is as follows. Specifically methylates the guanine in position 2445 (m2G2445) and the guanine in position 2069 (m7G2069) of 23S rRNA. This Erwinia tasmaniensis (strain DSM 17950 / CFBP 7177 / CIP 109463 / NCPPB 4357 / Et1/99) protein is Ribosomal RNA large subunit methyltransferase K/L.